We begin with the raw amino-acid sequence, 63 residues long: Large ribosomal subunit protein bL28 (63 aa).

It belongs to the bacterial ribosomal protein bL28 family.

This chain is Large ribosomal subunit protein bL28, found in Citrifermentans bemidjiense (strain ATCC BAA-1014 / DSM 16622 / JCM 12645 / Bem) (Geobacter bemidjiensis).